Reading from the N-terminus, the 890-residue chain is MTFWCMSILLIVGFLSKSELCEAQLSDEATLVAINRELGVPGWSSNGTDYCTWVGLKCGVNNSFVEMLDLSGLQLRGNVTLISDLRSLKHLDLSGNNFNGRIPTSFGNLSELEFLDLSLNRFVGAIPVEFGKLRGLRAFNISNNLLVGEIPDELKVLERLEEFQVSGNGLNGSIPHWVGNLSSLRVFTAYENDLVGEIPNGLGLVSELELLNLHSNQLEGKIPKGIFEKGKLKVLVLTQNRLTGELPEAVGICSGLSSIRIGNNELVGVIPRTIGNISGLTYFEADKNNLSGEIVAEFSKCSNLTLLNLAANGFAGTIPTELGQLINLQELILSGNSLFGEIPKSFLGSGNLNKLDLSNNRLNGTIPKELCSMPRLQYLLLDQNSIRGDIPHEIGNCVKLLQLQLGRNYLTGTIPPEIGRMRNLQIALNLSFNHLHGSLPPELGKLDKLVSLDVSNNLLTGSIPPLLKGMMSLIEVNFSNNLLNGPVPVFVPFQKSPNSSFLGNKELCGAPLSSSCGYSEDLDHLRYNHRVSYRIVLAVIGSGVAVFVSVTVVVLLFMMREKQEKAAAKNVDVEENVEDEQPAIIAGNVFLENLKQGIDLDAVVKATMKESNKLSTGTFSSVYKAVMPSGMIVSVKKLKSMDRAISHHQNKMIRELERLSKLCHDHLVRPIGFVIYEDVALLLHQHLPNGNLTQLIHESTKKPEYQPDWPMRLSIAVGAAEGLAFLHQVAIIHLDVSSSNVLLDSGYKAVLGEIEISKLLDPSRGTASISSVAGSFGYIPPEYAYTMQVTAPGNVYSYGVVLLEILTSRAPVEEEFGEGVDLVKWVHGASARGETPEQILDAKLSTVSFAWRREMLAALKVALLCTDITPAKRPKMKKVVEMLQEVKQIK.

An N-terminal signal peptide occupies residues 1-23 (MTFWCMSILLIVGFLSKSELCEA). Over 24 to 534 (QLSDEATLVA…LRYNHRVSYR (511 aa)) the chain is Extracellular. Asparagine 46, asparagine 61, asparagine 78, and asparagine 108 each carry an N-linked (GlcNAc...) asparagine glycan. 18 LRR repeats span residues 67-85 (MLDL…ISDL), 86-108 (RSLK…SFGN), 110-132 (SELE…EFGK), 133-157 (LRGL…LKVL), 159-181 (RLEE…VGNL), 182-205 (SSLR…LGLV), 206-229 (SELE…IFEK), 231-254 (KLKV…GICS), 256-276 (LSSI…TIGN), 278-300 (SGLT…EFSK), 301-325 (CSNL…LGQL), 326-349 (INLQ…FLGS), 350-373 (GNLN…LCSM), 375-397 (RLQY…IGNC), 399-421 (KLLQ…IGRM), 422-446 (RNLQ…LGKL), 447-469 (DKLV…LLKG), and 471-492 (MSLI…VFVP). Asparagine 140, asparagine 171, and asparagine 180 each carry an N-linked (GlcNAc...) asparagine glycan. N-linked (GlcNAc...) asparagine glycans are attached at residues asparagine 276, asparagine 289, and asparagine 303. The N-linked (GlcNAc...) asparagine glycan is linked to asparagine 363. N-linked (GlcNAc...) asparagine glycosylation is present at asparagine 429. N-linked (GlcNAc...) asparagine glycans are attached at residues asparagine 477 and asparagine 498. A helical membrane pass occupies residues 535-555 (IVLAVIGSGVAVFVSVTVVVL). Residues 556–890 (LFMMREKQEK…EMLQEVKQIK (335 aa)) lie on the Cytoplasmic side of the membrane. Residues 608–886 (MKESNKLSTG…KKVVEMLQEV (279 aa)) form the Protein kinase domain. Residues 614–622 (LSTGTFSSV) and lysine 636 contribute to the ATP site. Residue aspartate 735 is the Proton acceptor of the active site.

This sequence belongs to the protein kinase superfamily. Tyr protein kinase family. Expressed in the vascular strands of cotyledons, the shoot apex, hypocotyls, roots, leaves, stems and flowers.

The protein localises to the cell membrane. The enzyme catalyses L-tyrosyl-[protein] + ATP = O-phospho-L-tyrosyl-[protein] + ADP + H(+). Leucine-rich repeat receptor-like protein kinase that may play a role in vascular tissues development. This is Leucine-rich repeat receptor-like tyrosine-protein kinase PXC3 from Arabidopsis thaliana (Mouse-ear cress).